The primary structure comprises 302 residues: Phosphoribosylaminoimidazole-succinocarboxamide synthase (302 aa).

This sequence belongs to the SAICAR synthetase family.

It carries out the reaction 5-amino-1-(5-phospho-D-ribosyl)imidazole-4-carboxylate + L-aspartate + ATP = (2S)-2-[5-amino-1-(5-phospho-beta-D-ribosyl)imidazole-4-carboxamido]succinate + ADP + phosphate + 2 H(+). It functions in the pathway purine metabolism; IMP biosynthesis via de novo pathway; 5-amino-1-(5-phospho-D-ribosyl)imidazole-4-carboxamide from 5-amino-1-(5-phospho-D-ribosyl)imidazole-4-carboxylate: step 1/2. This chain is Phosphoribosylaminoimidazole-succinocarboxamide synthase, found in Cupriavidus metallidurans (strain ATCC 43123 / DSM 2839 / NBRC 102507 / CH34) (Ralstonia metallidurans).